The following is an 89-amino-acid chain: DNA/RNA-binding protein Alba 1 (89 aa).

Belongs to the histone-like Alba family.

The protein resides in the cytoplasm. Its subcellular location is the chromosome. Functionally, binds double-stranded DNA tightly but without sequence specificity. Involved in DNA compaction. The polypeptide is DNA/RNA-binding protein Alba 1 (Archaeoglobus fulgidus (strain ATCC 49558 / DSM 4304 / JCM 9628 / NBRC 100126 / VC-16)).